The following is a 364-amino-acid chain: Histidinol-phosphate aminotransferase 2 (364 aa).

At lysine 223 the chain carries N6-(pyridoxal phosphate)lysine.

Belongs to the class-II pyridoxal-phosphate-dependent aminotransferase family. Histidinol-phosphate aminotransferase subfamily. Homodimer. Pyridoxal 5'-phosphate serves as cofactor.

It catalyses the reaction L-histidinol phosphate + 2-oxoglutarate = 3-(imidazol-4-yl)-2-oxopropyl phosphate + L-glutamate. It participates in amino-acid biosynthesis; L-histidine biosynthesis; L-histidine from 5-phospho-alpha-D-ribose 1-diphosphate: step 7/9. This is Histidinol-phosphate aminotransferase 2 (hisC2) from Oceanobacillus iheyensis (strain DSM 14371 / CIP 107618 / JCM 11309 / KCTC 3954 / HTE831).